The chain runs to 122 residues: Large ribosomal subunit protein uL18 (122 aa).

Belongs to the universal ribosomal protein uL18 family. As to quaternary structure, part of the 50S ribosomal subunit; part of the 5S rRNA/L5/L18/L25 subcomplex. Contacts the 5S and 23S rRNAs.

Its function is as follows. This is one of the proteins that bind and probably mediate the attachment of the 5S RNA into the large ribosomal subunit, where it forms part of the central protuberance. The polypeptide is Large ribosomal subunit protein uL18 (Prochlorococcus marinus (strain MIT 9515)).